The chain runs to 523 residues: Glycerate kinase (523 aa).

Serine 60 is modified (phosphoserine). Residue lysine 200 is modified to N6-acetyllysine.

The protein belongs to the glycerate kinase type-2 family.

Its subcellular location is the cytoplasm. The catalysed reaction is (R)-glycerate + ATP = (2R)-3-phosphoglycerate + ADP + H(+). The sequence is that of Glycerate kinase (GLYCTK) from Bos taurus (Bovine).